Consider the following 193-residue polypeptide: MEAIKVHIGKTVALMNDNIDTDQIIPKSFLKRIERTGFGEFLFDSWRYLPNRKPNPDFPLNAPDRQEATILITGDNFGCGSSREHAAWALLDYRFRVIIAGSYSDIFYMNCTKNGVLPIVLPREAREKLAKITAEEKVTIDLPKQQVISSVGTYPFEIDATWKNKFINGLDDIAITFEHIDAIKAYEQKVDSI.

Belongs to the LeuD family. LeuD type 1 subfamily. As to quaternary structure, heterodimer of LeuC and LeuD.

The catalysed reaction is (2R,3S)-3-isopropylmalate = (2S)-2-isopropylmalate. It functions in the pathway amino-acid biosynthesis; L-leucine biosynthesis; L-leucine from 3-methyl-2-oxobutanoate: step 2/4. Functionally, catalyzes the isomerization between 2-isopropylmalate and 3-isopropylmalate, via the formation of 2-isopropylmaleate. The chain is 3-isopropylmalate dehydratase small subunit from Listeria innocua serovar 6a (strain ATCC BAA-680 / CLIP 11262).